The primary structure comprises 136 residues: Holo-[acyl-carrier-protein] synthase (136 aa).

Positions 8 and 57 each coordinate Mg(2+).

This sequence belongs to the P-Pant transferase superfamily. AcpS family. Requires Mg(2+) as cofactor.

The protein resides in the cytoplasm. The enzyme catalyses apo-[ACP] + CoA = holo-[ACP] + adenosine 3',5'-bisphosphate + H(+). In terms of biological role, transfers the 4'-phosphopantetheine moiety from coenzyme A to a Ser of acyl-carrier-protein. The sequence is that of Holo-[acyl-carrier-protein] synthase from Azorhizobium caulinodans (strain ATCC 43989 / DSM 5975 / JCM 20966 / LMG 6465 / NBRC 14845 / NCIMB 13405 / ORS 571).